Consider the following 86-residue polypeptide: Collagen alpha-1(XII) chain (86 aa).

Residues 1-12 (NQPGPPGPPGPP) show a composition bias toward pro residues. The interval 1-86 (NQPGPPGPPG…PGRPGDSGIR (86 aa)) is disordered. 14 positions are modified to hydroxyproline: Pro-6, Pro-9, Pro-12, Pro-18, Pro-24, Pro-27, Pro-30, Pro-42, Pro-51, Pro-54, Pro-65, Pro-74, Pro-77, and Pro-80. The segment covering 16 to 25 (GEPGPGGRPG) has biased composition (gly residues). The segment covering 35–50 (PQGERGLPGEXGERGL) has biased composition (low complexity). The segment covering 57–71 (QGESRTGPPGSTGSR) has biased composition (low complexity).

The protein belongs to the fibril-associated collagens with interrupted helices (FACIT) family. In terms of assembly, trimer of identical chains each containing 190 kDa of non-triple-helical sequences. The triple-helical tail is stabilized by disulfide bonds at each end. Post-translationally, prolines at the third position of the tripeptide repeating unit (G-X-Y) are hydroxylated in some or all of the chains.

It localises to the secreted. The protein localises to the extracellular space. Its subcellular location is the extracellular matrix. Its function is as follows. Type XII collagen interacts with type I collagen-containing fibrils, the COL1 domain could be associated with the surface of the fibrils, and the COL2 and NC3 domains may be localized in the perifibrillar matrix. In Bos taurus (Bovine), this protein is Collagen alpha-1(XII) chain (COL12A1).